A 190-amino-acid polypeptide reads, in one-letter code: RNA pyrophosphohydrolase (190 aa).

Positions 6-149 constitute a Nudix hydrolase domain; it reads GYRPNVGIIL…KRDVYTQALN (144 aa). The Nudix box motif lies at 38–59; it reads GGIKYGESPVQAMYRELHEEVG. The tract at residues 167–190 is disordered; sequence QRVHGPRSTDSPSSETDGHAHIAG.

It belongs to the Nudix hydrolase family. RppH subfamily. It depends on a divalent metal cation as a cofactor.

Accelerates the degradation of transcripts by removing pyrophosphate from the 5'-end of triphosphorylated RNA, leading to a more labile monophosphorylated state that can stimulate subsequent ribonuclease cleavage. In Bordetella pertussis (strain Tohama I / ATCC BAA-589 / NCTC 13251), this protein is RNA pyrophosphohydrolase.